A 231-amino-acid polypeptide reads, in one-letter code: Transmembrane protein 225 (231 aa).

Residues 1 to 13 are Cytoplasmic-facing; the sequence is MMRIPNRSIQAAN. Residues 14–34 form a helical membrane-spanning segment; it reads IFFSSGAILLLIAGLIMENWV. At 35 to 71 the chain is on the extracellular side; sequence ELIPKVRKDKVTHSPWLGCCPPFWPEESLEAIRRMMM. A helical membrane pass occupies residues 72–92; it reads MSLNISIYLNLIIGLQFTYMI. Over 93–99 the chain is Cytoplasmic; the sequence is SQNKCVH. The chain crosses the membrane as a helical span at residues 100 to 120; the sequence is LLIGFLSFFTGCLLFYAIIVY. Residues 121–139 are Extracellular-facing; sequence HHKLNKGQYVYFVNYKTKW. A helical transmembrane segment spans residues 140–160; it reads IVFTIYLTIALFLTCGIFSFI. At 161–231 the chain is on the cytoplasmic side; the sequence is QCTNRCACMK…LQSRRVTWAL (71 aa). The short motif at 225–229 is the RVxF element; sequence RRVTW.

In terms of assembly, interacts (via RVxF motif) with PPP1CC. Expressed in testis, specifically in spermatocytes and round spermatids.

The protein localises to the cytoplasmic vesicle. The protein resides in the secretory vesicle. Its subcellular location is the acrosome membrane. Probably inhibits protein phosphatase 1 (PP1) in sperm via binding to catalytic subunit PPP1CC. The protein is Transmembrane protein 225 (Tmem225) of Rattus norvegicus (Rat).